The following is a 423-amino-acid chain: POU domain, class 5, transcription factor 1.3 (423 aa).

Residues 85–211 form a disordered region; it reads GALSSGDPSP…GSGNEEDGTT (127 aa). Over residues 94 to 110 the composition is skewed to basic and acidic residues; the sequence is PEGRNEEDHGSISEERS. Composition is skewed to polar residues over residues 111–120, 156–173, and 194–203; these read SGTPSPNSPM, PQQS…GASN, and PSPNNASFGS. A POU-specific domain is found at 207–281; sequence EDGTTLEEME…LLEQWLGEAE (75 aa). The homeobox DNA-binding region spans 301–360; sequence KRKMRTCFDSVLKGRLEGHFMCNQKPGARELAEIAKELGLEKDVVRVWFCNRRQKEKSKS.

This sequence belongs to the POU transcription factor family. Class-5 subfamily. As to quaternary structure, interacts with the transcription factors tcf7l1/tcf3 and vegt.

The protein localises to the nucleus. Its function is as follows. Transcription factor that binds to the octamer motif (5'-ATTTGCAT-3'). Antagonizes the activity of nodal/activin signaling during gastrulation to suppress mesendoderm formation. Acts maternally to inhibit vegt and beta-catenin-activated gene transcription, probably by forming a transcriptional repression complex on the promoters of target genes. Binds to an octamer motif in interspersed RNA. The protein is POU domain, class 5, transcription factor 1.3 (pou5f1.3) of Xenopus tropicalis (Western clawed frog).